The chain runs to 308 residues: Aspartate carbamoyltransferase catalytic subunit (308 aa).

Positions 58 and 59 each coordinate carbamoyl phosphate. Residue Lys-86 coordinates L-aspartate. The carbamoyl phosphate site is built by Arg-108, His-136, and Gln-139. L-aspartate is bound by residues Arg-169 and Arg-222. Gly-264 and Pro-265 together coordinate carbamoyl phosphate.

Belongs to the aspartate/ornithine carbamoyltransferase superfamily. ATCase family. Heterododecamer (2C3:3R2) of six catalytic PyrB chains organized as two trimers (C3), and six regulatory PyrI chains organized as three dimers (R2).

It carries out the reaction carbamoyl phosphate + L-aspartate = N-carbamoyl-L-aspartate + phosphate + H(+). Its pathway is pyrimidine metabolism; UMP biosynthesis via de novo pathway; (S)-dihydroorotate from bicarbonate: step 2/3. In terms of biological role, catalyzes the condensation of carbamoyl phosphate and aspartate to form carbamoyl aspartate and inorganic phosphate, the committed step in the de novo pyrimidine nucleotide biosynthesis pathway. This Campylobacter hominis (strain ATCC BAA-381 / DSM 21671 / CCUG 45161 / LMG 19568 / NCTC 13146 / CH001A) protein is Aspartate carbamoyltransferase catalytic subunit.